The following is a 192-amino-acid chain: NADH-quinone oxidoreductase subunit B 1 (192 aa).

[4Fe-4S] cluster contacts are provided by cysteine 71, cysteine 72, cysteine 136, and cysteine 166.

Belongs to the complex I 20 kDa subunit family. As to quaternary structure, NDH-1 is composed of 14 different subunits. Subunits NuoB, C, D, E, F, and G constitute the peripheral sector of the complex. It depends on [4Fe-4S] cluster as a cofactor.

It is found in the cell inner membrane. The catalysed reaction is a quinone + NADH + 5 H(+)(in) = a quinol + NAD(+) + 4 H(+)(out). In terms of biological role, NDH-1 shuttles electrons from NADH, via FMN and iron-sulfur (Fe-S) centers, to quinones in the respiratory chain. The immediate electron acceptor for the enzyme in this species is believed to be ubiquinone. Couples the redox reaction to proton translocation (for every two electrons transferred, four hydrogen ions are translocated across the cytoplasmic membrane), and thus conserves the redox energy in a proton gradient. This Rhizobium meliloti (strain 1021) (Ensifer meliloti) protein is NADH-quinone oxidoreductase subunit B 1.